Consider the following 834-residue polypeptide: Leucine--tRNA ligase (834 aa).

The 'HIGH' region motif lies at proline 42–histidine 52. The 'KMSKS' region signature appears at lysine 619–serine 623. An ATP-binding site is contributed by lysine 622.

Belongs to the class-I aminoacyl-tRNA synthetase family.

Its subcellular location is the cytoplasm. It carries out the reaction tRNA(Leu) + L-leucine + ATP = L-leucyl-tRNA(Leu) + AMP + diphosphate. In Actinobacillus pleuropneumoniae serotype 7 (strain AP76), this protein is Leucine--tRNA ligase.